Here is a 293-residue protein sequence, read N- to C-terminus: MLMISILYSLFPPLLFPSLLAAFGASIAGGIVGSYIVVKRIVSISGSIAHSILGGVGIALWLQYQFDLPISPLHGAIASAIFVAICIGNVHLKYHEREDSIISMIWSIGMAVGMLCISKLPSFNSDLADFLFGNILWVTSRDLYFLGILDLLIVATVSICHTRFLALCFDEKYMALNRYSIKAWYFLLLILTAITTVVLMYVMGVILMLSMLVLPVSIACRFSYKMSSIIFTASILNICCSFLGIILAYILDLPVGPIIAILMGIAYSLSLLLKRSCNTSTPSPVSPESKINS.

7 helical membrane-spanning segments follow: residues Ser18–Val38, Ile41–Trp61, Leu68–Gly88, Ile101–Pro121, Asp142–Thr162, Phe186–Ile206, and Phe242–Leu262.

This sequence belongs to the ABC-3 integral membrane protein family.

It is found in the cell inner membrane. Part of an ATP-driven transport system TC_0696/TC_0697/TC_0698 for a metal. This is Probable metal transport system membrane protein TC_0698 from Chlamydia muridarum (strain MoPn / Nigg).